We begin with the raw amino-acid sequence, 80 residues long: Exodeoxyribonuclease 7 small subunit (80 aa).

This sequence belongs to the XseB family. In terms of assembly, heterooligomer composed of large and small subunits.

It is found in the cytoplasm. The enzyme catalyses Exonucleolytic cleavage in either 5'- to 3'- or 3'- to 5'-direction to yield nucleoside 5'-phosphates.. Functionally, bidirectionally degrades single-stranded DNA into large acid-insoluble oligonucleotides, which are then degraded further into small acid-soluble oligonucleotides. The sequence is that of Exodeoxyribonuclease 7 small subunit from Rickettsia africae (strain ESF-5).